The primary structure comprises 235 residues: Ion-translocating oxidoreductase complex subunit E (235 aa).

5 helical membrane-spanning segments follow: residues 63–83 (LGLS…ISLF), 93–113 (IPIY…LMNA), 117–137 (TLYQ…IIIG), 152–172 (IWDG…LGAL), and 206–226 (SFLL…LLAI).

This sequence belongs to the NqrDE/RnfAE family. As to quaternary structure, the complex is composed of six subunits: RnfA, RnfB, RnfC, RnfD, RnfE and RnfG.

It is found in the cell inner membrane. Functionally, part of a membrane-bound complex that couples electron transfer with translocation of ions across the membrane. The polypeptide is Ion-translocating oxidoreductase complex subunit E (Haemophilus influenzae (strain PittEE)).